The chain runs to 290 residues: Putative phosphatase MPN_427 (290 aa).

Asp-16 acts as the Nucleophile in catalysis. Asp-16 contributes to the Mg(2+) binding site. Leu-17 lines the phosphate pocket. Asp-18 serves as a coordination point for Mg(2+). Phosphate is bound by residues Thr-53 to Gly-54 and Lys-216. Residues Asp-239 and Ser-240 each contribute to the Mg(2+) site. A phosphate-binding site is contributed by Asn-242.

Belongs to the HAD-like hydrolase superfamily. Cof family. It depends on Mg(2+) as a cofactor.

This chain is Putative phosphatase MPN_427, found in Mycoplasma pneumoniae (strain ATCC 29342 / M129 / Subtype 1) (Mycoplasmoides pneumoniae).